A 487-amino-acid chain; its full sequence is N-succinylglutamate 5-semialdehyde dehydrogenase (487 aa).

Position 221–226 (221–226 (GSSDTG)) interacts with NAD(+). Active-site residues include glutamate 244 and cysteine 278.

This sequence belongs to the aldehyde dehydrogenase family. AstD subfamily.

It catalyses the reaction N-succinyl-L-glutamate 5-semialdehyde + NAD(+) + H2O = N-succinyl-L-glutamate + NADH + 2 H(+). It functions in the pathway amino-acid degradation; L-arginine degradation via AST pathway; L-glutamate and succinate from L-arginine: step 4/5. In terms of biological role, catalyzes the NAD-dependent reduction of succinylglutamate semialdehyde into succinylglutamate. The polypeptide is N-succinylglutamate 5-semialdehyde dehydrogenase (Burkholderia lata (strain ATCC 17760 / DSM 23089 / LMG 22485 / NCIMB 9086 / R18194 / 383)).